The primary structure comprises 78 residues: Large ribosomal subunit protein bL28 (78 aa).

Residues 1–25 are disordered; sequence MSRVCQVTGKRPAVGNNRSHAKNAT.

This sequence belongs to the bacterial ribosomal protein bL28 family.

This is Large ribosomal subunit protein bL28 from Vibrio cholerae serotype O1 (strain ATCC 39541 / Classical Ogawa 395 / O395).